A 67-amino-acid polypeptide reads, in one-letter code: Large ribosomal subunit protein uL29 (67 aa).

This sequence belongs to the universal ribosomal protein uL29 family.

The polypeptide is Large ribosomal subunit protein uL29 (Pelotomaculum thermopropionicum (strain DSM 13744 / JCM 10971 / SI)).